The following is a 349-amino-acid chain: Bifunctional protein FolKE (349 aa).

Residues 1 to 226 (MQTTYLSMGS…LFEIDSSKND (226 aa)) form a 2-amino-4-hydroxy-6-hydroxymethyldihydropteridine pyrophosphokinase region. Positions 226–349 (DSIVLIKDIP…KRMEFLESLL (124 aa)) are GTP cyclohydrolase 1.

The protein in the N-terminal section; belongs to the HPPK family. In the C-terminal section; belongs to the GTP cyclohydrolase I family. In terms of assembly, homomer.

The catalysed reaction is 6-hydroxymethyl-7,8-dihydropterin + ATP = (7,8-dihydropterin-6-yl)methyl diphosphate + AMP + H(+). It catalyses the reaction GTP + H2O = 7,8-dihydroneopterin 3'-triphosphate + formate + H(+). It participates in cofactor biosynthesis; 7,8-dihydroneopterin triphosphate biosynthesis; 7,8-dihydroneopterin triphosphate from GTP: step 1/1. It functions in the pathway cofactor biosynthesis; tetrahydrofolate biosynthesis; 2-amino-4-hydroxy-6-hydroxymethyl-7,8-dihydropteridine diphosphate from 7,8-dihydroneopterin triphosphate: step 4/4. In Lactococcus lactis subsp. cremoris (strain MG1363), this protein is Bifunctional protein FolKE (folKE).